Here is a 257-residue protein sequence, read N- to C-terminus: Ribosomal RNA small subunit methyltransferase A (257 aa).

S-adenosyl-L-methionine-binding residues include histidine 12, leucine 14, glycine 39, glutamate 60, aspartate 83, and asparagine 101.

Belongs to the class I-like SAM-binding methyltransferase superfamily. rRNA adenine N(6)-methyltransferase family. RsmA subfamily.

Its subcellular location is the cytoplasm. The catalysed reaction is adenosine(1518)/adenosine(1519) in 16S rRNA + 4 S-adenosyl-L-methionine = N(6)-dimethyladenosine(1518)/N(6)-dimethyladenosine(1519) in 16S rRNA + 4 S-adenosyl-L-homocysteine + 4 H(+). Functionally, specifically dimethylates two adjacent adenosines (A1518 and A1519) in the loop of a conserved hairpin near the 3'-end of 16S rRNA in the 30S particle. May play a critical role in biogenesis of 30S subunits. The protein is Ribosomal RNA small subunit methyltransferase A of Nitrosomonas europaea (strain ATCC 19718 / CIP 103999 / KCTC 2705 / NBRC 14298).